A 490-amino-acid polypeptide reads, in one-letter code: Cysteine--tRNA ligase (490 aa).

Zn(2+) is bound at residue Cys-31. The 'HIGH' region motif lies at 33-43; sequence PTVYGDAHLGH. Cys-226, His-251, and Glu-255 together coordinate Zn(2+). A 'KMSKS' region motif is present at residues 283–287; that stretch reads KMGKS. Lys-286 provides a ligand contact to ATP.

The protein belongs to the class-I aminoacyl-tRNA synthetase family. In terms of assembly, monomer. The cofactor is Zn(2+).

It localises to the cytoplasm. The catalysed reaction is tRNA(Cys) + L-cysteine + ATP = L-cysteinyl-tRNA(Cys) + AMP + diphosphate. This chain is Cysteine--tRNA ligase, found in Porphyromonas gingivalis (strain ATCC BAA-308 / W83).